Consider the following 514-residue polypeptide: 2-isopropylmalate synthase (514 aa).

The region spanning 5 to 268 (LIIFDTTLRD…DVGIDTSQIV (264 aa)) is the Pyruvate carboxyltransferase domain. Mn(2+) contacts are provided by Asp14, His202, His204, and Asn239. The tract at residues 395–514 (KFVSLSQRSE…KDDKVNPQRS (120 aa)) is regulatory domain.

Belongs to the alpha-IPM synthase/homocitrate synthase family. LeuA type 1 subfamily. Homodimer. The cofactor is Mn(2+).

It localises to the cytoplasm. It carries out the reaction 3-methyl-2-oxobutanoate + acetyl-CoA + H2O = (2S)-2-isopropylmalate + CoA + H(+). The protein operates within amino-acid biosynthesis; L-leucine biosynthesis; L-leucine from 3-methyl-2-oxobutanoate: step 1/4. Its function is as follows. Catalyzes the condensation of the acetyl group of acetyl-CoA with 3-methyl-2-oxobutanoate (2-ketoisovalerate) to form 3-carboxy-3-hydroxy-4-methylpentanoate (2-isopropylmalate). In Burkholderia cenocepacia (strain ATCC BAA-245 / DSM 16553 / LMG 16656 / NCTC 13227 / J2315 / CF5610) (Burkholderia cepacia (strain J2315)), this protein is 2-isopropylmalate synthase.